Reading from the N-terminus, the 236-residue chain is 2-C-methyl-D-erythritol 4-phosphate cytidylyltransferase (236 aa).

The protein belongs to the IspD/TarI cytidylyltransferase family. IspD subfamily.

It catalyses the reaction 2-C-methyl-D-erythritol 4-phosphate + CTP + H(+) = 4-CDP-2-C-methyl-D-erythritol + diphosphate. It functions in the pathway isoprenoid biosynthesis; isopentenyl diphosphate biosynthesis via DXP pathway; isopentenyl diphosphate from 1-deoxy-D-xylulose 5-phosphate: step 2/6. Its function is as follows. Catalyzes the formation of 4-diphosphocytidyl-2-C-methyl-D-erythritol from CTP and 2-C-methyl-D-erythritol 4-phosphate (MEP). This is 2-C-methyl-D-erythritol 4-phosphate cytidylyltransferase from Pseudomonas syringae pv. tomato (strain ATCC BAA-871 / DC3000).